Consider the following 449-residue polypeptide: Glucose-6-phosphate isomerase (449 aa).

The Proton donor role is filled by glutamate 291. Catalysis depends on residues histidine 312 and lysine 426.

The protein belongs to the GPI family.

Its subcellular location is the cytoplasm. It carries out the reaction alpha-D-glucose 6-phosphate = beta-D-fructose 6-phosphate. The protein operates within carbohydrate biosynthesis; gluconeogenesis. Its pathway is carbohydrate degradation; glycolysis; D-glyceraldehyde 3-phosphate and glycerone phosphate from D-glucose: step 2/4. Functionally, catalyzes the reversible isomerization of glucose-6-phosphate to fructose-6-phosphate. This Streptococcus agalactiae serotype Ia (strain ATCC 27591 / A909 / CDC SS700) protein is Glucose-6-phosphate isomerase.